A 472-amino-acid polypeptide reads, in one-letter code: Ribulose bisphosphate carboxylase large chain 1 (472 aa).

Substrate is bound by residues N115 and T165. K167 (proton acceptor) is an active-site residue. Position 169 (K169) interacts with substrate. Mg(2+)-binding residues include K193, D195, and E196. Position 193 is an N6-carboxylysine (K193). H286 serves as the catalytic Proton acceptor. The substrate site is built by R287, H319, and S371.

It belongs to the RuBisCO large chain family. Type I subfamily. In terms of assembly, heterohexadecamer of 8 large chains and 8 small chains. Requires Mg(2+) as cofactor.

The catalysed reaction is 2 (2R)-3-phosphoglycerate + 2 H(+) = D-ribulose 1,5-bisphosphate + CO2 + H2O. It catalyses the reaction D-ribulose 1,5-bisphosphate + O2 = 2-phosphoglycolate + (2R)-3-phosphoglycerate + 2 H(+). Functionally, ruBisCO catalyzes two reactions: the carboxylation of D-ribulose 1,5-bisphosphate, the primary event in carbon dioxide fixation, as well as the oxidative fragmentation of the pentose substrate. Both reactions occur simultaneously and in competition at the same active site. In Allochromatium vinosum (strain ATCC 17899 / DSM 180 / NBRC 103801 / NCIMB 10441 / D) (Chromatium vinosum), this protein is Ribulose bisphosphate carboxylase large chain 1.